Consider the following 530-residue polypeptide: Estrogen receptor beta (530 aa).

A modulating region spans residues 1-148 (MEIKNSPSSL…SPSAKRDAHF (148 aa)). Phosphoserine; alternate is present on serine 61. Serine 61 carries an O-linked (GlcNAc) serine; alternate glycan. A phosphoserine; by MAPK mark is found at serine 87 and serine 105. NR C4-type zinc fingers lie at residues 149-169 (CAVC…CEGC) and 185-209 (CPAT…LRKC). Residues 149-214 (CAVCSDYASG…RLRKCYEVGM (66 aa)) constitute a DNA-binding region (nuclear receptor). The region spanning 264–498 (SPEQLVLTLL…DLLLEMLNAH (235 aa)) is the NR LBD domain. Over residues 506-515 (SISGSECCST) the composition is skewed to polar residues. The disordered stretch occupies residues 506–530 (SISGSECCSTEDSKSKEGSQNLQSQ).

Belongs to the nuclear hormone receptor family. NR3 subfamily. In terms of assembly, binds DNA as a homodimer. Can form a heterodimer with ESR1. Interacts with NCOA1, NCOA3, NCOA5 and NCOA6 coactivators, leading to a strong increase of transcription of target genes. Interacts with UBE1C and AKAP13. Interacts with DNTTIP2. Interacts with CCDC62 in the presence of estradiol/E2; this interaction seems to enhance the transcription of target genes. Interacts with DNAAF4. Interacts with PRMT2. Interacts with CCAR2 (via N-terminus) in a ligand-independent manner. Interacts with RBM39, in the presence of estradiol (E2). Interacts with STUB1/CHIP. In terms of processing, phosphorylation at Ser-87 and Ser-105 recruits NCOA1. As to expression, expressed in prostate, ovary, Leydig cells and in epithelium of the efferent ductules and of the initial segment of the epididymis.

It is found in the nucleus. Its function is as follows. Nuclear hormone receptor. Binds estrogens with an affinity similar to that of ESR1/ER-alpha, and activates expression of reporter genes containing estrogen response elements (ERE) in an estrogen-dependent manner. In Mus musculus (Mouse), this protein is Estrogen receptor beta (Esr2).